The primary structure comprises 461 residues: Chromosomal replication initiator protein DnaA (461 aa).

Residues 1 to 68 (MINAWAQIEH…EKAAASVLGS (68 aa)) are domain I, interacts with DnaA modulators. Residues 68–118 (SVPTITVVSGEEPAAAPRPVQVPAQKRPAAARTSGAEQMGLPLHYASRSAD) form a domain II region. Residues 119–336 (SIKWMHSFDE…SCLRNLLLKA (218 aa)) are domain III, AAA+ region. ATP contacts are provided by Gly162, Gly164, Lys165, and Thr166. The segment at 337-461 (RLLNQQITMD…VERNGRIIHP (125 aa)) is domain IV, binds dsDNA.

It belongs to the DnaA family. Oligomerizes as a right-handed, spiral filament on DNA at oriC.

It localises to the cytoplasm. Plays an essential role in the initiation and regulation of chromosomal replication. ATP-DnaA binds to the origin of replication (oriC) to initiate formation of the DNA replication initiation complex once per cell cycle. Binds the DnaA box (a 9 base pair repeat at the origin) and separates the double-stranded (ds)DNA. Forms a right-handed helical filament on oriC DNA; dsDNA binds to the exterior of the filament while single-stranded (ss)DNA is stabiized in the filament's interior. The ATP-DnaA-oriC complex binds and stabilizes one strand of the AT-rich DNA unwinding element (DUE), permitting loading of DNA polymerase. After initiation quickly degrades to an ADP-DnaA complex that is not apt for DNA replication. Binds acidic phospholipids. The sequence is that of Chromosomal replication initiator protein DnaA from Oleidesulfovibrio alaskensis (strain ATCC BAA-1058 / DSM 17464 / G20) (Desulfovibrio alaskensis).